The sequence spans 218 residues: Putative transposase InsD for insertion element IS2E (218 aa).

An Integrase catalytic domain is found at 23 to 206 (KPAVPPSKRA…SPREYLRQRA (184 aa)).

Involved in the transposition of the insertion sequence IS2. The polypeptide is Putative transposase InsD for insertion element IS2E (insD8) (Escherichia coli (strain K12)).